The primary structure comprises 194 residues: CASP-like protein 4D1 (194 aa).

At 1 to 10 the chain is on the cytoplasmic side; it reads MASRTVLLPS. A helical membrane pass occupies residues 11–31; it reads AVLILRLLSLGLLAASLALIA. The Extracellular segment spans residues 32–55; the sequence is ADKLNVDSDPPQRYTFRDVYAYRY. The chain crosses the membrane as a helical span at residues 56 to 76; the sequence is VLAVAVIGCAYTLLQLPLAAV. At 77–94 the chain is on the cytoplasmic side; it reads SIIASGNNKRGIGAGGGS. A helical transmembrane segment spans residues 95 to 115; it reads VAVALLVLVLLADVVFALLLA. Residues 116 to 161 lie on the Extracellular side of the membrane; sequence TGAAAGFAFTYDVKRYLDGQFDDDSIGTPEVDKLHRDMDKFFDLAY. A helical membrane pass occupies residues 162-182; it reads AAAGLMLAAAACMALVIMLSV. The Cytoplasmic portion of the chain corresponds to 183-194; it reads YSLARQVRSDYI.

It belongs to the Casparian strip membrane proteins (CASP) family. As to quaternary structure, homodimer and heterodimers.

It localises to the cell membrane. The sequence is that of CASP-like protein 4D1 from Sorghum bicolor (Sorghum).